The sequence spans 176 residues: MILSDRDIAWYIEKGLLRIDPLLDDTIRENGVDLRLDSEFCRFNPDAPELDTRKPFNREIYYNCVKVDPEQGFTVKPYEHVLATTMETVCLPDDLVGLVNVRSTFARYGIFVPPTVIDAGFCGQITIEIIGSAYPVRLYPGQRFLHVVFVRTTSPVANPYHGKYQGQRGVTPPRPD.

DCTP is bound by residues 102 to 107 (RSTFAR) and aspartate 118. Glutamate 128 serves as the catalytic Proton donor/acceptor. Tyrosine 160 and glutamine 167 together coordinate dCTP.

The protein belongs to the dCTP deaminase family. As to quaternary structure, homotrimer.

The enzyme catalyses dCTP + H2O + H(+) = dUTP + NH4(+). The protein operates within pyrimidine metabolism; dUMP biosynthesis; dUMP from dCTP (dUTP route): step 1/2. Its function is as follows. Catalyzes the deamination of dCTP to dUTP. The chain is dCTP deaminase from Hyperthermus butylicus (strain DSM 5456 / JCM 9403 / PLM1-5).